Reading from the N-terminus, the 325-residue chain is Delta(1)-pyrroline-2-carboxylate reductase (325 aa).

This sequence belongs to the ornithine cyclodeaminase/mu-crystallin family.

The enzyme catalyses L-proline + NAD(+) = 1-pyrroline-2-carboxylate + NADH + H(+). It catalyses the reaction L-proline + NADP(+) = 1-pyrroline-2-carboxylate + NADPH + H(+). Its function is as follows. Catalyzes the reduction of Delta(1)-pyrroline-2-carboxylate (Pyr2C) to L-proline, using preferentially NADPH over NADH as the electron donor. May be involved in a degradation pathway that converts trans-3-hydroxy-L-proline (t3LHyp) to L-proline. In Bacillus cereus (strain ZK / E33L), this protein is Delta(1)-pyrroline-2-carboxylate reductase.